A 77-amino-acid polypeptide reads, in one-letter code: Large ribosomal subunit protein bL28 (77 aa).

The protein belongs to the bacterial ribosomal protein bL28 family.

This Variovorax paradoxus (strain S110) protein is Large ribosomal subunit protein bL28.